A 391-amino-acid polypeptide reads, in one-letter code: Leucine aminopeptidase 1 (391 aa).

Positions 1-19 (MKLSIALALGATASTGVLA) are cleaved as a signal peptide. The propeptide occupies 20-91 (AVVPQQEPLI…YPTLHAGSYV (72 aa)). The N-linked (GlcNAc...) asparagine glycan is linked to asparagine 183. The Zn(2+) site is built by histidine 191 and aspartate 210. Asparagine 235 carries N-linked (GlcNAc...) asparagine glycosylation. Zn(2+) is bound by residues glutamate 249 and aspartate 276. A disulfide bridge connects residues cysteine 325 and cysteine 329. Histidine 358 serves as a coordination point for Zn(2+).

Belongs to the peptidase M28 family. M28E subfamily. Monomer. Zn(2+) is required as a cofactor.

It localises to the secreted. Its function is as follows. Extracellular aminopeptidase that allows assimilation of proteinaceous substrates. The chain is Leucine aminopeptidase 1 (lap1) from Aspergillus niger (strain ATCC MYA-4892 / CBS 513.88 / FGSC A1513).